We begin with the raw amino-acid sequence, 413 residues long: Arginine biosynthesis bifunctional protein ArgJ (413 aa).

Substrate-binding residues include threonine 163, lysine 189, threonine 200, glutamate 286, asparagine 408, and threonine 413. Threonine 200 acts as the Nucleophile in catalysis.

Belongs to the ArgJ family. Heterotetramer of two alpha and two beta chains.

The protein localises to the cytoplasm. It carries out the reaction N(2)-acetyl-L-ornithine + L-glutamate = N-acetyl-L-glutamate + L-ornithine. The enzyme catalyses L-glutamate + acetyl-CoA = N-acetyl-L-glutamate + CoA + H(+). It functions in the pathway amino-acid biosynthesis; L-arginine biosynthesis; L-ornithine and N-acetyl-L-glutamate from L-glutamate and N(2)-acetyl-L-ornithine (cyclic): step 1/1. It participates in amino-acid biosynthesis; L-arginine biosynthesis; N(2)-acetyl-L-ornithine from L-glutamate: step 1/4. Functionally, catalyzes two activities which are involved in the cyclic version of arginine biosynthesis: the synthesis of N-acetylglutamate from glutamate and acetyl-CoA as the acetyl donor, and of ornithine by transacetylation between N(2)-acetylornithine and glutamate. In Staphylococcus aureus (strain COL), this protein is Arginine biosynthesis bifunctional protein ArgJ.